A 369-amino-acid polypeptide reads, in one-letter code: Methionine import ATP-binding protein MetN 1 (369 aa).

A disordered region spans residues 1 to 26; it reads MTTMTVPPSLLPLEPFPTAPDTRAST. An ABC transporter domain is found at 29-265; that stretch reads IRLHGLGKRY…PRHAVTRSLL (237 aa). 62–69 serves as a coordination point for ATP; it reads GRSGAGKS.

It belongs to the ABC transporter superfamily. Methionine importer (TC 3.A.1.24) family. The complex is composed of two ATP-binding proteins (MetN), two transmembrane proteins (MetI) and a solute-binding protein (MetQ).

The protein localises to the cell inner membrane. The enzyme catalyses L-methionine(out) + ATP + H2O = L-methionine(in) + ADP + phosphate + H(+). It carries out the reaction D-methionine(out) + ATP + H2O = D-methionine(in) + ADP + phosphate + H(+). Functionally, part of the ABC transporter complex MetNIQ involved in methionine import. Responsible for energy coupling to the transport system. The chain is Methionine import ATP-binding protein MetN 1 from Pseudomonas aeruginosa (strain UCBPP-PA14).